A 231-amino-acid chain; its full sequence is Cytochrome c oxidase subunit 2 (231 aa).

At 1 to 14 (MAHPVHVGLKEATS) the chain is on the mitochondrial intermembrane side. The helical transmembrane segment at 15–45 (PFMEELIAFHDHTLMIIFLISSLVLYIISMM) threads the bilayer. Residues 46-59 (LTTKLTHTSTMNAQ) lie on the Mitochondrial matrix side of the membrane. The chain crosses the membrane as a helical span at residues 60 to 87 (EIEIIWTILPAIILIMIALPSLRILYMT). Residues 88–231 (DEFNKPYLTL…WASYLYIVSL (144 aa)) lie on the Mitochondrial intermembrane side of the membrane. Cu cation-binding residues include H161, C196, E198, C200, H204, and M207. E198 is a Mg(2+) binding site.

This sequence belongs to the cytochrome c oxidase subunit 2 family. Component of the cytochrome c oxidase (complex IV, CIV), a multisubunit enzyme composed of 14 subunits. The complex is composed of a catalytic core of 3 subunits MT-CO1, MT-CO2 and MT-CO3, encoded in the mitochondrial DNA, and 11 supernumerary subunits COX4I, COX5A, COX5B, COX6A, COX6B, COX6C, COX7A, COX7B, COX7C, COX8 and NDUFA4, which are encoded in the nuclear genome. The complex exists as a monomer or a dimer and forms supercomplexes (SCs) in the inner mitochondrial membrane with NADH-ubiquinone oxidoreductase (complex I, CI) and ubiquinol-cytochrome c oxidoreductase (cytochrome b-c1 complex, complex III, CIII), resulting in different assemblies (supercomplex SCI(1)III(2)IV(1) and megacomplex MCI(2)III(2)IV(2)). Found in a complex with TMEM177, COA6, COX18, COX20, SCO1 and SCO2. Interacts with TMEM177 in a COX20-dependent manner. Interacts with COX20. Interacts with COX16. Cu cation is required as a cofactor.

It is found in the mitochondrion inner membrane. It catalyses the reaction 4 Fe(II)-[cytochrome c] + O2 + 8 H(+)(in) = 4 Fe(III)-[cytochrome c] + 2 H2O + 4 H(+)(out). Component of the cytochrome c oxidase, the last enzyme in the mitochondrial electron transport chain which drives oxidative phosphorylation. The respiratory chain contains 3 multisubunit complexes succinate dehydrogenase (complex II, CII), ubiquinol-cytochrome c oxidoreductase (cytochrome b-c1 complex, complex III, CIII) and cytochrome c oxidase (complex IV, CIV), that cooperate to transfer electrons derived from NADH and succinate to molecular oxygen, creating an electrochemical gradient over the inner membrane that drives transmembrane transport and the ATP synthase. Cytochrome c oxidase is the component of the respiratory chain that catalyzes the reduction of oxygen to water. Electrons originating from reduced cytochrome c in the intermembrane space (IMS) are transferred via the dinuclear copper A center (CU(A)) of subunit 2 and heme A of subunit 1 to the active site in subunit 1, a binuclear center (BNC) formed by heme A3 and copper B (CU(B)). The BNC reduces molecular oxygen to 2 water molecules using 4 electrons from cytochrome c in the IMS and 4 protons from the mitochondrial matrix. This chain is Cytochrome c oxidase subunit 2 (MT-CO2), found in Brachyteles hypoxanthus (Northern muriqui).